We begin with the raw amino-acid sequence, 277 residues long: NADPH-dependent 7-cyano-7-deazaguanine reductase (277 aa).

Residue 86–88 (IES) participates in substrate binding. 88 to 89 (SK) is a binding site for NADPH. Catalysis depends on cysteine 184, which acts as the Thioimide intermediate. Residue aspartate 191 is the Proton donor of the active site. A substrate-binding site is contributed by 223–224 (HE). 252–253 (RG) contributes to the NADPH binding site.

This sequence belongs to the GTP cyclohydrolase I family. QueF type 2 subfamily. Homodimer.

The protein localises to the cytoplasm. The catalysed reaction is 7-aminomethyl-7-carbaguanine + 2 NADP(+) = 7-cyano-7-deazaguanine + 2 NADPH + 3 H(+). It functions in the pathway tRNA modification; tRNA-queuosine biosynthesis. Functionally, catalyzes the NADPH-dependent reduction of 7-cyano-7-deazaguanine (preQ0) to 7-aminomethyl-7-deazaguanine (preQ1). This Chromohalobacter salexigens (strain ATCC BAA-138 / DSM 3043 / CIP 106854 / NCIMB 13768 / 1H11) protein is NADPH-dependent 7-cyano-7-deazaguanine reductase.